We begin with the raw amino-acid sequence, 192 residues long: Protein A16 (192 aa).

The first 22 residues, 1 to 22 (MLLANTAAAVLLLIVCIGASVG), serve as a signal peptide directing secretion. The 116-residue stretch at 71–186 (KNKKFTIGTL…CLNPLNIFPY (116 aa)) folds into the C-type lectin domain. Cys163 and Cys177 are joined by a disulfide.

Expressed in the gut of adults.

The polypeptide is Protein A16 (CTL3) (Anopheles gambiae (African malaria mosquito)).